The primary structure comprises 234 residues: bZIP transcription factor 1 (234 aa).

Residues 67 to 134 are disordered; that stretch reads RAQSDGSNAL…DKQRNAQQQL (68 aa). Residues 70–86 are compositionally biased toward polar residues; it reads SDGSNALLSSIGPSGTT. Basic and acidic residues predominate over residues 88–128; it reads RPRDEMDCFTDTHKHKRGDGNKSRRREQCRANQARYRDKQR. The 64-residue stretch at 106–169 folds into the bZIP domain; that stretch reads DGNKSRRREQ…RTNQSPWNTV (64 aa). Residues 109 to 128 are basic motif; sequence KSRRREQCRANQARYRDKQR. The interval 134–155 is leucine-zipper; the sequence is LERSVEQLQSELSTLKHRNLDL.

The protein belongs to the bZIP family. Interacts with PKZ1.

The protein resides in the nucleus. Its function is as follows. Required for normal zoospore movement, formation of appressoria by germinated zoospore cysts and plant infection. This chain is bZIP transcription factor 1, found in Phytophthora infestans (Potato late blight agent).